The primary structure comprises 224 residues: UPF0758 protein SPO0054 (224 aa).

Positions 102–224 (VISSWDALLD…ELSFRAEGYL (123 aa)) constitute an MPN domain. Positions 173, 175, and 186 each coordinate Zn(2+). A JAMM motif motif is present at residues 173-186 (HNHPSGDPTPSQSD).

The protein belongs to the UPF0758 family.

The chain is UPF0758 protein SPO0054 from Ruegeria pomeroyi (strain ATCC 700808 / DSM 15171 / DSS-3) (Silicibacter pomeroyi).